A 173-amino-acid chain; its full sequence is Ribosome maturation factor RimP (173 aa).

Belongs to the RimP family.

The protein localises to the cytoplasm. Functionally, required for maturation of 30S ribosomal subunits. This is Ribosome maturation factor RimP from Chlorobaculum tepidum (strain ATCC 49652 / DSM 12025 / NBRC 103806 / TLS) (Chlorobium tepidum).